The sequence spans 249 residues: Glucosamine-6-phosphate deaminase (249 aa).

Asp67 (proton acceptor; for enolization step) is an active-site residue. Catalysis depends on Asn136, which acts as the For ring-opening step. Catalysis depends on His138, which acts as the Proton acceptor; for ring-opening step. Catalysis depends on Glu143, which acts as the For ring-opening step.

This sequence belongs to the glucosamine/galactosamine-6-phosphate isomerase family. NagB subfamily.

It carries out the reaction alpha-D-glucosamine 6-phosphate + H2O = beta-D-fructose 6-phosphate + NH4(+). The protein operates within amino-sugar metabolism; N-acetylneuraminate degradation; D-fructose 6-phosphate from N-acetylneuraminate: step 5/5. Catalyzes the reversible isomerization-deamination of glucosamine 6-phosphate (GlcN6P) to form fructose 6-phosphate (Fru6P) and ammonium ion. In Clostridium botulinum (strain Eklund 17B / Type B), this protein is Glucosamine-6-phosphate deaminase.